The sequence spans 311 residues: Tricarboxylate transport protein, mitochondrial (311 aa).

The propeptide at 1 to 13 (MAAPRGPRALSAA) is removed in mature form. Positions 1–21 (MAAPRGPRALSAAAPGSGKPK) are disordered. Solcar repeat units lie at residues 23–111 (THPG…LSNH), 122–208 (RRGL…LRNW), and 218–303 (MNPL…VVKL). The next 3 helical transmembrane spans lie at 29 to 46 (ILAG…TFPT), 86 to 105 (GLSS…FGMF), and 129 to 143 (LGAG…VCPM). Phosphoserine is present on Ser-156. 3 helical membrane passes run 183–202 (GLTA…FFVM), 224–241 (GVFG…NTPL), and 278–297 (GTVP…FIIY).

This sequence belongs to the mitochondrial carrier (TC 2.A.29) family. Post-translationally, possesses a short cleavable presequence, which, however, is found to be dispensable both for targeting to mitochondria and insertion into the inner membrane. However, the presequence is required to keep SLC25A1 in a soluble state and thus in an import-competent state. Mature SLC25A1 lacking the presequence is prone to aggregation. In terms of tissue distribution, expressed minimally but ubiquitously throughout the adult brain. Detected at higher levels in the olfactory bulb, neocortex and cerebellum. Also expressed in a subset of large cells in the globus pallidus.

It localises to the mitochondrion inner membrane. The protein localises to the mitochondrion membrane. The enzyme catalyses (S)-malate(in) + citrate(out) = (S)-malate(out) + citrate(in). It carries out the reaction D-threo-isocitrate(in) + citrate(out) = D-threo-isocitrate(out) + citrate(in). It catalyses the reaction citrate(out) + succinate(in) = citrate(in) + succinate(out). The catalysed reaction is cis-aconitate(in) + citrate(out) = cis-aconitate(out) + citrate(in). The enzyme catalyses trans-aconitate(in) + citrate(out) = trans-aconitate(out) + citrate(in). It carries out the reaction phosphoenolpyruvate(in) + citrate(out) = phosphoenolpyruvate(out) + citrate(in). It catalyses the reaction maleate(in) + citrate(out) = maleate(out) + citrate(in). Mitochondrial electroneutral antiporter that exports citrate from the mitochondria into the cytosol in exchange for malate. Also able to mediate the exchange of citrate for isocitrate, phosphoenolpyruvate, cis-aconitate and to a lesser extent trans-aconitate, maleate and succinate. In the cytoplasm, citrate plays important roles in fatty acid and sterol synthesis, regulation of glycolysis, protein acetylation, and other physiopathological processes. The protein is Tricarboxylate transport protein, mitochondrial of Mus musculus (Mouse).